We begin with the raw amino-acid sequence, 88 residues long: MAHKKAGGSSRNGRDSEGRRLGVKKFGSEAVIPGNIIVRQRGTKWHPGANVGMGKDHTIFALVPGHVRFETRRGRAFVGVTPLAEAAE.

The tract at residues Met-1–Lys-24 is disordered.

The protein belongs to the bacterial ribosomal protein bL27 family.

This is Large ribosomal subunit protein bL27 from Methylobacterium radiotolerans (strain ATCC 27329 / DSM 1819 / JCM 2831 / NBRC 15690 / NCIMB 10815 / 0-1).